A 239-amino-acid chain; its full sequence is Putative transcriptional regulator of 2-aminoethylphosphonate degradation operons (239 aa).

Residues 8 to 76 form the HTH gntR-type domain; it reads IPQYLLIKAQ…DRRGWFVTPE (69 aa). The segment at residues 36-55 is a DNA-binding region (H-T-H motif); it reads ERELCAIFNTTRITIRESLA.

This Salmonella typhi protein is Putative transcriptional regulator of 2-aminoethylphosphonate degradation operons (phnR).